A 177-amino-acid chain; its full sequence is Bifunctional protein PyrR (177 aa).

The PRPP-binding signature appears at 99–111; sequence VILIDDVLYTGRT.

The protein belongs to the purine/pyrimidine phosphoribosyltransferase family. PyrR subfamily. As to quaternary structure, homodimer and homohexamer; in equilibrium.

The catalysed reaction is UMP + diphosphate = 5-phospho-alpha-D-ribose 1-diphosphate + uracil. Its function is as follows. Regulates transcriptional attenuation of the pyrimidine nucleotide (pyr) operon by binding in a uridine-dependent manner to specific sites on pyr mRNA. This disrupts an antiterminator hairpin in the RNA and favors formation of a downstream transcription terminator, leading to a reduced expression of downstream genes. Functionally, also displays a weak uracil phosphoribosyltransferase activity which is not physiologically significant. This is Bifunctional protein PyrR from Pediococcus pentosaceus (strain ATCC 25745 / CCUG 21536 / LMG 10740 / 183-1w).